Here is a 339-residue protein sequence, read N- to C-terminus: Fructose-1,6-bisphosphatase isozyme 2 (339 aa).

The interval 3–10 is important for interaction with ALDOA; sequence DRSPFETD. Residues V18 and 28–32 each bind AMP; that span reads TGELT. Mg(2+)-binding residues include D69 and E98. 113-114 serves as a coordination point for AMP; that stretch reads KY. The Mg(2+) site is built by D119, L121, and D122. Substrate is bound at residue D122. Residue R141 coordinates AMP. The Nuclear localization signal motif lies at 204–208; the sequence is KKKGK. Residue 213-216 coordinates substrate; the sequence is NEGY. Residues Y216 and Y219 each carry the phosphotyrosine modification. Substrate contacts are provided by residues 245–249, Y265, and K275; that span reads YVGSM. Residue E281 participates in Mg(2+) binding.

Belongs to the FBPase class 1 family. In terms of assembly, homotetramer. Interacts with ALDOA; the interaction blocks inhibition by physiological concentrations of AMP and reduces inhibition by Ca(2+). Interacts with alpha-actinin and F-actin. It depends on Mg(2+) as a cofactor.

The protein resides in the cell junction. The protein localises to the cytoplasm. It localises to the nucleus. Its subcellular location is the myofibril. It is found in the sarcomere. The protein resides in the z line. It carries out the reaction beta-D-fructose 1,6-bisphosphate + H2O = beta-D-fructose 6-phosphate + phosphate. The protein operates within carbohydrate biosynthesis; gluconeogenesis. Subject to complex allosteric regulation. The enzyme can assume an active R-state, or an inactive T-state. Intermediate conformations may exist. AMP acts as an allosteric inhibitor. Fructose 2,6-bisphosphate acts as a competitive inhibitor. Strongly inhibited by Ca(2+). Functionally, catalyzes the hydrolysis of fructose 1,6-bisphosphate to fructose 6-phosphate in the presence of divalent cations and probably participates in glycogen synthesis from carbohydrate precursors, such as lactate. The protein is Fructose-1,6-bisphosphatase isozyme 2 (FBP2) of Bos taurus (Bovine).